A 223-amino-acid polypeptide reads, in one-letter code: uncharacterized protein (223 aa).

The Response regulatory domain occupies 5–116 (RILIVEDDVM…ELLLRMRNML (112 aa)). D52 carries the post-translational modification 4-aspartylphosphate. Residues 121 to 219 (GTFTQIKHLY…IYGEGYRLNT (99 aa)) constitute a DNA-binding region (ompR/PhoB-type).

Phosphorylated by YbdK.

It localises to the cytoplasm. Member of the two-component regulatory system YbdK/YbdJ. This is an uncharacterized protein from Bacillus subtilis (strain 168).